We begin with the raw amino-acid sequence, 360 residues long: Putative beta-glucosidase 15 (360 aa).

Composition is skewed to basic and acidic residues over residues 1–11 (MARRRMGEEGK) and 47–67 (GRREEDDAGGREKGEKRERKG). Disordered stretches follow at residues 1–21 (MARRRMGEEGKGGGWGLNGRQ) and 35–103 (GWRS…RAER). Positions 75–86 (GKRRRERRRGGR) are enriched in basic residues. Tyr-183 contacts a beta-D-glucoside. Residues Cys-191 and Cys-196 are joined by a disulfide bond. Residues Glu-254, Trp-301, 308–309 (EW), and Phe-317 each bind a beta-D-glucoside. Glu-254 acts as the Nucleophile in catalysis. Asn-346 carries an N-linked (GlcNAc...) asparagine glycan.

It belongs to the glycosyl hydrolase 1 family.

The enzyme catalyses Hydrolysis of terminal, non-reducing beta-D-glucosyl residues with release of beta-D-glucose.. The chain is Putative beta-glucosidase 15 (BGLU15) from Oryza sativa subsp. japonica (Rice).